Consider the following 246-residue polypeptide: MSGHSKWHNIQAKKGKVDAKRGKIFTKIGKEIVVAVKQGGPSADSNPRLRDVIAKAKANNMPNDTIERSIKKASGELNAVDYETITYEGYGPAGIAVLVDVLTDNKNRSAGNVRYAFTKQGGNMGSTGCVSFMFQSKGQIVIEKKDGLDEDELMMMALDAGAEDFESEDEVYAVTTSQEDFGTVREALEAEGLEFLEAEIKMVPNTYTAIDEETATKFQKMLDVLEDDDDVQNVYHNAEFPEGWEE.

It belongs to the TACO1 family.

Its subcellular location is the cytoplasm. This is Probable transcriptional regulatory protein CLB_3102 from Clostridium botulinum (strain ATCC 19397 / Type A).